The primary structure comprises 116 residues: Iron-sulfur cluster insertion protein ErpA (116 aa).

Residues C44, C108, and C110 each coordinate iron-sulfur cluster.

It belongs to the HesB/IscA family. Homodimer. Requires iron-sulfur cluster as cofactor.

In terms of biological role, required for insertion of 4Fe-4S clusters for at least IspG. This Stutzerimonas stutzeri (strain A1501) (Pseudomonas stutzeri) protein is Iron-sulfur cluster insertion protein ErpA.